An 883-amino-acid polypeptide reads, in one-letter code: Alanine--tRNA ligase (883 aa).

Residues histidine 563, histidine 567, cysteine 677, and histidine 681 each coordinate Zn(2+).

This sequence belongs to the class-II aminoacyl-tRNA synthetase family. It depends on Zn(2+) as a cofactor.

The protein resides in the cytoplasm. The enzyme catalyses tRNA(Ala) + L-alanine + ATP = L-alanyl-tRNA(Ala) + AMP + diphosphate. Catalyzes the attachment of alanine to tRNA(Ala) in a two-step reaction: alanine is first activated by ATP to form Ala-AMP and then transferred to the acceptor end of tRNA(Ala). Also edits incorrectly charged Ser-tRNA(Ala) and Gly-tRNA(Ala) via its editing domain. The chain is Alanine--tRNA ligase from Cereibacter sphaeroides (strain ATCC 17025 / ATH 2.4.3) (Rhodobacter sphaeroides).